Here is a 119-residue protein sequence, read N- to C-terminus: Putative F-box protein At2g39415 (119 aa).

The region spanning 37-92 (IDSISSLPDVILQQILSSLPTNLAIRTSVLSTRWRHVWSDTPYIYFDGPGTLYRGL) is the F-box domain.

The polypeptide is Putative F-box protein At2g39415 (Arabidopsis thaliana (Mouse-ear cress)).